The following is a 175-amino-acid chain: Peptide deformylase (175 aa).

Fe cation contacts are provided by cysteine 96 and histidine 138. Glutamate 139 is an active-site residue. Histidine 142 provides a ligand contact to Fe cation.

The protein belongs to the polypeptide deformylase family. Fe(2+) is required as a cofactor.

The enzyme catalyses N-terminal N-formyl-L-methionyl-[peptide] + H2O = N-terminal L-methionyl-[peptide] + formate. Removes the formyl group from the N-terminal Met of newly synthesized proteins. Requires at least a dipeptide for an efficient rate of reaction. N-terminal L-methionine is a prerequisite for activity but the enzyme has broad specificity at other positions. In Helicobacter pylori (strain Shi470), this protein is Peptide deformylase.